Here is a 237-residue protein sequence, read N- to C-terminus: Protein lin-31 (237 aa).

The fork-head DNA-binding region spans 12-103; sequence QKPPYSYIWL…SGMFENGSCL (92 aa). Disordered stretches follow at residues 110-141 and 195-237; these read RARG…LLPE and NFES…ILSS. Low complexity-rich tracts occupy residues 206–216 and 227–237; these read SEISGSGSSSS and SSFSIESILSS.

It is found in the nucleus. In terms of biological role, lin-31 regulates how vulval precursor cells choose their fate. It helps specify three alternative cell fates in vulval development. In Caenorhabditis elegans, this protein is Protein lin-31 (lin-31).